We begin with the raw amino-acid sequence, 260 residues long: MIIVLSPAKSLDYETPPHVKKHTIPDFVEDAAELIGGLRLLSPQQIASLMDISDQLAHLNFQRYAEWSPKFGAHNAKQAVLAFNGDVYEGFNAKTLSAADLDYAQNHVRVLSGLYGLLRPLDLLQPYRLEMGTRFANPRGKDLYAFWGERITQALNAQLKKNAVASRVLVNCASGEYFRSVKPKLLEAPVITPVFEDWKGGRYKIISFHAKRARGLMARYAVENRLDRPEQLKDFNAEGYAFDAEASNDSTYVFRRRVAE.

Belongs to the UPF0246 family.

This chain is UPF0246 protein Bxeno_A1262, found in Paraburkholderia xenovorans (strain LB400).